The primary structure comprises 233 residues: Large ribosomal subunit protein uL1 (233 aa).

This sequence belongs to the universal ribosomal protein uL1 family. Part of the 50S ribosomal subunit.

Its function is as follows. Binds directly to 23S rRNA. The L1 stalk is quite mobile in the ribosome, and is involved in E site tRNA release. Functionally, protein L1 is also a translational repressor protein, it controls the translation of the L11 operon by binding to its mRNA. This chain is Large ribosomal subunit protein uL1, found in Campylobacter jejuni subsp. doylei (strain ATCC BAA-1458 / RM4099 / 269.97).